A 1052-amino-acid chain; its full sequence is Membrane-bound transcription factor site-1 protease (1052 aa).

Positions 1–17 are cleaved as a signal peptide; it reads MKLVNIWLLLLVVLLCG. The propeptide occupies 18-186; the sequence is KKHLGDRLGK…TGRHSSRRLL (169 aa). Asparagine 148 carries N-linked (GlcNAc...) asparagine glycosylation. Phosphoserine is present on serine 168. The Lumenal portion of the chain corresponds to 187–999; sequence RAIPRQVAQT…MPGRYNQEVG (813 aa). A Peptidase S8 domain is found at 190 to 472; sequence PRQVAQTLQA…HGKLDLLRAY (283 aa). The active-site Charge relay system is aspartate 218. Asparagine 236 carries an N-linked (GlcNAc...) asparagine glycan. Histidine 249 acts as the Charge relay system in catalysis. Asparagine 305 carries an N-linked (GlcNAc...) asparagine glycan. Residue serine 414 is the Charge relay system of the active site. Residues asparagine 515 and asparagine 728 are each glycosylated (N-linked (GlcNAc...) asparagine). The span at 877–887 shows a compositional bias: polar residues; that stretch reads PSLSHSGNRQR. The interval 877–900 is disordered; the sequence is PSLSHSGNRQRPPSGAGLAPPERM. A glycan (N-linked (GlcNAc...) asparagine) is linked at asparagine 939. A helical transmembrane segment spans residues 1000–1022; it reads QTIPVFAFLGAMVALAFFVVQIS. At 1023–1052 the chain is on the cytoplasmic side; the sequence is KAKSRPKRRRPRAKRPQLAQQAHPARTPSV. Over residues 1026-1037 the composition is skewed to basic residues; the sequence is SRPKRRRPRAKR. The tract at residues 1026–1052 is disordered; the sequence is SRPKRRRPRAKRPQLAQQAHPARTPSV.

It belongs to the peptidase S8 family. In terms of assembly, interacts with LYSET; this interaction bridges GNPTAB to MBTPS1. It depends on Ca(2+) as a cofactor. Post-translationally, the 148 kDa zymogen is processed progressively into two membrane-bound 120 and 106 kDa forms in the endoplasmic reticulum, and late into a secreted 98 kDa form. The propeptide is autocatalytically removed through an intramolecular cleavage after Leu-186. Further cleavage generates 14, 10, and 8 kDa intermediates. As to expression, widely expressed. In adult rat, highly expressed in anterior pituitary, thyroid and adrenal glands and in liver. In 2-day old rat, detected in developing skin, striated muscles, cardiac muscles, bones, teeth and internal organs. Highly expressed in retina, cerebellum, pituitary, submaxillary, thyroid and adrenal glands, molars, thymus, kidney and intestine.

Its subcellular location is the endoplasmic reticulum membrane. The protein localises to the golgi apparatus membrane. The catalysed reaction is Processes precursors containing basic and hydrophobic/aliphatic residues at P4 and P2, respectively, with a relatively relaxed acceptance of amino acids at P1 and P3.. Inhibited by divalent copper and zinc ions, but not by nickel or cobalt. Inhibited by its prosegment, but not smaller fragments. Inhibited by 4-(2-aminoethyl)benzenesulfonyl fluoride (AEBSF), a serine protease inhibitor. Its function is as follows. Serine protease that cleaves after hydrophobic or small residues, provided that Arg or Lys is in position P4: known substrates include SREBF1/SREBP1, SREBF2/SREBP2, BDNF, GNPTAB, ATF6, ATF6B and FAM20C. Cleaves substrates after Arg-Ser-Val-Leu (SREBP2), Arg-His-Leu-Leu (ATF6), Arg-Gly-Leu-Thr (BDNF) and its own propeptide after Arg-Arg-Leu-Leu. Catalyzes the first step in the proteolytic activation of the sterol regulatory element-binding proteins (SREBPs) SREBF1/SREBP1 and SREBF2/SREBP2. Also mediates the first step in the proteolytic activation of the cyclic AMP-dependent transcription factor ATF-6 (ATF6 and ATF6B). Mediates the protein cleavage of GNPTAB into subunit alpha and beta, thereby participating in biogenesis of lysosomes. Cleaves the propeptide from FAM20C which is required for FAM20C secretion from the Golgi apparatus membrane and for enhancement of FAM20C kinase activity, promoting osteoblast differentiation and biomineralization. Involved in the regulation of M6P-dependent Golgi-to-lysosome trafficking of lysosomal enzymes. It is required for the activation of CREB3L2/BBF2H7, a transcriptional activator of MIA3/TANGO and other genes controlling mega vesicle formation. Therefore, it plays a key role in the regulation of mega vesicle-mediated collagen trafficking. In astrocytes and osteoblasts, upon DNA damage and ER stress, mediates the first step of the regulated intramembrane proteolytic activation of the transcription factor CREB3L1, leading to the inhibition of cell-cycle progression. This Rattus norvegicus (Rat) protein is Membrane-bound transcription factor site-1 protease (Mbtps1).